Reading from the N-terminus, the 486-residue chain is UDP-N-acetylmuramoyl-L-alanyl-D-glutamate--2,6-diaminopimelate ligase (486 aa).

Ser-26 is a binding site for UDP-N-acetyl-alpha-D-muramoyl-L-alanyl-D-glutamate. Position 104–110 (104–110 (GTNGKTS)) interacts with ATP. Residues 152–153 (TT), Ser-179, Gln-185, and Arg-187 contribute to the UDP-N-acetyl-alpha-D-muramoyl-L-alanyl-D-glutamate site. Lys-219 bears the N6-carboxylysine mark. Residues Arg-383, 407 to 410 (DNPR), Gly-455, and Glu-459 contribute to the meso-2,6-diaminopimelate site. The Meso-diaminopimelate recognition motif motif lies at 407–410 (DNPR).

It belongs to the MurCDEF family. MurE subfamily. The cofactor is Mg(2+). Post-translationally, carboxylation is probably crucial for Mg(2+) binding and, consequently, for the gamma-phosphate positioning of ATP.

It localises to the cytoplasm. The catalysed reaction is UDP-N-acetyl-alpha-D-muramoyl-L-alanyl-D-glutamate + meso-2,6-diaminopimelate + ATP = UDP-N-acetyl-alpha-D-muramoyl-L-alanyl-gamma-D-glutamyl-meso-2,6-diaminopimelate + ADP + phosphate + H(+). It participates in cell wall biogenesis; peptidoglycan biosynthesis. Catalyzes the addition of meso-diaminopimelic acid to the nucleotide precursor UDP-N-acetylmuramoyl-L-alanyl-D-glutamate (UMAG) in the biosynthesis of bacterial cell-wall peptidoglycan. This is UDP-N-acetylmuramoyl-L-alanyl-D-glutamate--2,6-diaminopimelate ligase from Caulobacter vibrioides (strain ATCC 19089 / CIP 103742 / CB 15) (Caulobacter crescentus).